The sequence spans 482 residues: tRNA sulfurtransferase (482 aa).

Residues 61–165 enclose the THUMP domain; the sequence is PAIRDALTRI…NDRLLLVKGR (105 aa). ATP is bound by residues 183–184, K265, G287, and Q296; that span reads LI. A disulfide bond links C344 and C456. One can recognise a Rhodanese domain in the interval 404 to 482; that stretch reads FGANDAILDI…GFSNVKVYRP (79 aa). C456 (cysteine persulfide intermediate) is an active-site residue.

Belongs to the ThiI family.

The protein resides in the cytoplasm. The enzyme catalyses [ThiI sulfur-carrier protein]-S-sulfanyl-L-cysteine + a uridine in tRNA + 2 reduced [2Fe-2S]-[ferredoxin] + ATP + H(+) = [ThiI sulfur-carrier protein]-L-cysteine + a 4-thiouridine in tRNA + 2 oxidized [2Fe-2S]-[ferredoxin] + AMP + diphosphate. It catalyses the reaction [ThiS sulfur-carrier protein]-C-terminal Gly-Gly-AMP + S-sulfanyl-L-cysteinyl-[cysteine desulfurase] + AH2 = [ThiS sulfur-carrier protein]-C-terminal-Gly-aminoethanethioate + L-cysteinyl-[cysteine desulfurase] + A + AMP + 2 H(+). It functions in the pathway cofactor biosynthesis; thiamine diphosphate biosynthesis. Its function is as follows. Catalyzes the ATP-dependent transfer of a sulfur to tRNA to produce 4-thiouridine in position 8 of tRNAs, which functions as a near-UV photosensor. Also catalyzes the transfer of sulfur to the sulfur carrier protein ThiS, forming ThiS-thiocarboxylate. This is a step in the synthesis of thiazole, in the thiamine biosynthesis pathway. The sulfur is donated as persulfide by IscS. This is tRNA sulfurtransferase from Klebsiella pneumoniae subsp. pneumoniae (strain ATCC 700721 / MGH 78578).